Here is a 355-residue protein sequence, read N- to C-terminus: Carbohydrate sulfotransferase 10 (355 aa).

The Cytoplasmic portion of the chain corresponds to 1-6 (MHHRWL). The chain crosses the membrane as a helical; Signal-anchor for type II membrane protein span at residues 7–27 (LLVACFWVLFMLMVASKLITL). Residues 28–355 (TMKDPEGYGN…FGYKEPTFLF (328 aa)) are Lumenal-facing. N-linked (GlcNAc...) asparagine glycans are attached at residues Asn93 and Asn98. 3'-phosphoadenylyl sulfate is bound by residues 126–132 (PKVGNTQ) and 188–196 (RDPFERLIS). N-linked (GlcNAc...) asparagine glycosylation is present at Asn316.

This sequence belongs to the sulfotransferase 2 family.

It localises to the golgi apparatus membrane. In terms of biological role, catalyzes the transfer of sulfate to position 3 of terminal glucuronic acid of both protein- and lipid-linked oligosaccharides. Participates in biosynthesis of HNK-1 carbohydrate structure, a sulfated glucuronyl-lactosaminyl residue carried by many neural recognition molecules. The polypeptide is Carbohydrate sulfotransferase 10 (chst10) (Xenopus laevis (African clawed frog)).